A 237-amino-acid polypeptide reads, in one-letter code: Speedy protein E4 (237 aa).

A disordered region spans residues 1 to 61 (MASGQARPPF…KRKSEWSDES (61 aa)).

The protein belongs to the Speedy/Ringo family. In terms of tissue distribution, predominantly expressed in testis.

This chain is Speedy protein E4, found in Homo sapiens (Human).